The following is a 487-amino-acid chain: Ribosomal protein uS12 methylthiotransferase RimO (487 aa).

The MTTase N-terminal domain occupies 38–149; the sequence is PTVAFAHLGC…IVEVLEQVEA (112 aa). [4Fe-4S] cluster-binding residues include Cys47, Cys83, Cys112, Cys187, Cys191, and Cys194. In terms of domain architecture, Radical SAM core spans 173-402; it reads TTSEAVAYLK…MEAQQAISAE (230 aa). The TRAM domain maps to 405-476; that stretch reads GAWVGRIVDV…IYDLEGEVVG (72 aa).

Belongs to the methylthiotransferase family. RimO subfamily. [4Fe-4S] cluster is required as a cofactor.

It localises to the cytoplasm. The enzyme catalyses L-aspartate(89)-[ribosomal protein uS12]-hydrogen + (sulfur carrier)-SH + AH2 + 2 S-adenosyl-L-methionine = 3-methylsulfanyl-L-aspartate(89)-[ribosomal protein uS12]-hydrogen + (sulfur carrier)-H + 5'-deoxyadenosine + L-methionine + A + S-adenosyl-L-homocysteine + 2 H(+). In terms of biological role, catalyzes the methylthiolation of an aspartic acid residue of ribosomal protein uS12. The chain is Ribosomal protein uS12 methylthiotransferase RimO from Synechococcus sp. (strain RCC307).